The following is a 430-amino-acid chain: MTTLTLNTSLLSSCRILAAFSGGLDSTVLLHQLVLWRERHPDVTLRAIHIHHGLSPHADSWVRHCETVCERWQVPLVVERMTLADNGLGIEAHAREARYRAFAQTLLPGEVLATAQHLDDQCETFLLALKRGSGPAGLSAMGERSPFAGTLLLRPLLRETRKTLEQWAVRHGLCWIEDESNQDDAYDRNFLRLRALPLLQRRWPHFPAAVARSATLCAEQERLLDELLASDLTDCITAEGTLRLSPLMLMSDVRRAAILRRWLAMRNAPMPSRDALERIWQEVALARDDASPCLRFGDHEIRRYQSQLWWIKSVAGQHETTVVWPVWQTPLALPAGLGTVQLVPGGELRRPREEESVSIRFKAPGVLHIVGRNGGRKLKKIWQEQGIPPWRRDTTPLLFYGETLIAAAGVFVTREGAAEDKEGVSLVWHA.

Position 21-26 (21-26 (SGGLDS)) interacts with ATP.

Belongs to the tRNA(Ile)-lysidine synthase family.

The protein resides in the cytoplasm. It catalyses the reaction cytidine(34) in tRNA(Ile2) + L-lysine + ATP = lysidine(34) in tRNA(Ile2) + AMP + diphosphate + H(+). Ligates lysine onto the cytidine present at position 34 of the AUA codon-specific tRNA(Ile) that contains the anticodon CAU, in an ATP-dependent manner. Cytidine is converted to lysidine, thus changing the amino acid specificity of the tRNA from methionine to isoleucine. The protein is tRNA(Ile)-lysidine synthase of Salmonella paratyphi A (strain ATCC 9150 / SARB42).